The chain runs to 179 residues: Large ribosomal subunit protein uL6 (179 aa).

This sequence belongs to the universal ribosomal protein uL6 family. In terms of assembly, part of the 50S ribosomal subunit.

Its function is as follows. This protein binds to the 23S rRNA, and is important in its secondary structure. It is located near the subunit interface in the base of the L7/L12 stalk, and near the tRNA binding site of the peptidyltransferase center. This chain is Large ribosomal subunit protein uL6, found in Streptomyces griseus subsp. griseus (strain JCM 4626 / CBS 651.72 / NBRC 13350 / KCC S-0626 / ISP 5235).